The sequence spans 194 residues: uncharacterized protein (194 aa).

A helical transmembrane segment spans residues 17 to 37; the sequence is DVWLYLLVFGCLSVLVLVLVH.

It belongs to the IIV-6 307L family.

Its subcellular location is the membrane. This is an uncharacterized protein from Invertebrate iridescent virus 3 (IIV-3).